A 91-amino-acid chain; its full sequence is Cytochrome b-c1 complex subunit 10, mitochondrial (91 aa).

Over 1–34 (MFATSILRSAYPAYKSPYGPKYQYQPHIDGITPK) the chain is Mitochondrial matrix. Residues 35-58 (QLVRILPTAAAWTGVALFAVVYYA) form a helical membrane-spanning segment. At 59-91 (SGIPRLRRDVLQRIPYLGERYFVNEIPASDNPF) the chain is on the mitochondrial intermembrane side.

It belongs to the UQCR11/QCR10 family. In terms of assembly, component of the ubiquinol-cytochrome c oxidoreductase (cytochrome b-c1 complex, complex III, CIII), a multisubunit enzyme composed of 10 subunits. The complex is composed of 3 respiratory subunits cytochrome b (cob), cytochrome c1 (cyt-1) and Rieske protein (fes-1), 2 core protein subunits pep and ucr-1, and 5 low-molecular weight protein subunits qcr6, qcr7, qcr8, qcr9 and probably NCU16844/qcr10. The complex exists as an obligatory dimer and forms supercomplexes (SCs) in the inner mitochondrial membrane with NADH-ubiquinone oxidoreductase (complex I, CI) and cytochrome c oxidase (complex IV, CIV), resulting in different assemblies (supercomplexes SCI(1)III(2), SCIII(2)IV(1) and SCIII(2)IV(2) as well as higher order I(x)III(y)IV(z) megacomplexes).

It is found in the mitochondrion inner membrane. Functionally, component of the ubiquinol-cytochrome c oxidoreductase, a multisubunit transmembrane complex that is part of the mitochondrial electron transport chain which drives oxidative phosphorylation. The respiratory chain contains 3 multisubunit complexes succinate dehydrogenase (complex II, CII), ubiquinol-cytochrome c oxidoreductase (cytochrome b-c1 complex, complex III, CIII) and cytochrome c oxidase (complex IV, CIV), that cooperate to transfer electrons derived from NADH and succinate to molecular oxygen, creating an electrochemical gradient over the inner membrane that drives transmembrane transport and the ATP synthase. The cytochrome b-c1 complex catalyzes electron transfer from ubiquinol to cytochrome c, linking this redox reaction to translocation of protons across the mitochondrial inner membrane, with protons being carried across the membrane as hydrogens on the quinol. In the process called Q cycle, 2 protons are consumed from the matrix, 4 protons are released into the intermembrane space and 2 electrons are passed to cytochrome c. This is Cytochrome b-c1 complex subunit 10, mitochondrial from Neurospora crassa (strain ATCC 24698 / 74-OR23-1A / CBS 708.71 / DSM 1257 / FGSC 987).